A 425-amino-acid polypeptide reads, in one-letter code: Serine--tRNA ligase (425 aa).

Residue 233 to 235 (TAE) participates in L-serine binding. ATP is bound at residue 264-266 (RRE). Residue Glu-287 participates in L-serine binding. Position 351–354 (351–354 (EISS)) interacts with ATP. Position 385 (Ser-385) interacts with L-serine.

It belongs to the class-II aminoacyl-tRNA synthetase family. Type-1 seryl-tRNA synthetase subfamily. As to quaternary structure, homodimer. The tRNA molecule binds across the dimer.

It is found in the cytoplasm. The enzyme catalyses tRNA(Ser) + L-serine + ATP = L-seryl-tRNA(Ser) + AMP + diphosphate + H(+). It catalyses the reaction tRNA(Sec) + L-serine + ATP = L-seryl-tRNA(Sec) + AMP + diphosphate + H(+). Its pathway is aminoacyl-tRNA biosynthesis; selenocysteinyl-tRNA(Sec) biosynthesis; L-seryl-tRNA(Sec) from L-serine and tRNA(Sec): step 1/1. In terms of biological role, catalyzes the attachment of serine to tRNA(Ser). Is also able to aminoacylate tRNA(Sec) with serine, to form the misacylated tRNA L-seryl-tRNA(Sec), which will be further converted into selenocysteinyl-tRNA(Sec). This chain is Serine--tRNA ligase, found in Synechococcus sp. (strain CC9902).